An 863-amino-acid polypeptide reads, in one-letter code: Bifunctional uridylyltransferase/uridylyl-removing enzyme (863 aa).

The interval 1 to 328 is uridylyltransferase; that stretch reads MLFSPTLSSL…SSNQDTVIDQ (328 aa). Residues 329–687 are uridylyl-removing; it reads LDDDFQLINQ…ISNRFSLGGT (359 aa). One can recognise an HD domain in the interval 446 to 568; that stretch reads VDEHTLRVML…MQNQVRLDYL (123 aa). 2 consecutive ACT domains span residues 688–764 and 794–863; these read EVFI…KLPA and EMEL…QQIR.

Belongs to the GlnD family. The cofactor is Mg(2+).

It catalyses the reaction [protein-PII]-L-tyrosine + UTP = [protein-PII]-uridylyl-L-tyrosine + diphosphate. It carries out the reaction [protein-PII]-uridylyl-L-tyrosine + H2O = [protein-PII]-L-tyrosine + UMP + H(+). Uridylyltransferase (UTase) activity is inhibited by glutamine, while glutamine activates uridylyl-removing (UR) activity. In terms of biological role, modifies, by uridylylation and deuridylylation, the PII regulatory proteins (GlnB and homologs), in response to the nitrogen status of the cell that GlnD senses through the glutamine level. Under low glutamine levels, catalyzes the conversion of the PII proteins and UTP to PII-UMP and PPi, while under higher glutamine levels, GlnD hydrolyzes PII-UMP to PII and UMP (deuridylylation). Thus, controls uridylylation state and activity of the PII proteins, and plays an important role in the regulation of nitrogen assimilation and metabolism. The chain is Bifunctional uridylyltransferase/uridylyl-removing enzyme from Haemophilus influenzae (strain ATCC 51907 / DSM 11121 / KW20 / Rd).